The primary structure comprises 110 residues: Putative caspase recruitment domain-containing protein 17P (110 aa).

Residues 1 to 91 (MADKVLKEKR…HLAGTLGLSA (91 aa)) form the CARD domain.

Interacts with pro-CASP1. In terms of tissue distribution, ubiquitous.

It is found in the cytoplasm. Regulator of procaspase-1/CASP1 activation implicated in the regulation of the proteolytic maturation of pro-IL-1beta/IL1B and its release during inflammation. Inhibits the release of IL1B in response to LPS in monocytes. However, unlike CASP1, do not induce NF-kappa-B activation. This Homo sapiens (Human) protein is Putative caspase recruitment domain-containing protein 17P (CARD17P).